The sequence spans 164 residues: Phosphopantetheine adenylyltransferase (164 aa).

T9 is a substrate binding site. Residues 9-10 and H17 contribute to the ATP site; that span reads TF. Residues K41, L73, and R87 each contribute to the substrate site. ATP-binding positions include 88 to 90, E98, and 123 to 129; these read GLR and YMFISAT.

This sequence belongs to the bacterial CoaD family. Homohexamer. Mg(2+) serves as cofactor.

The protein localises to the cytoplasm. The catalysed reaction is (R)-4'-phosphopantetheine + ATP + H(+) = 3'-dephospho-CoA + diphosphate. It participates in cofactor biosynthesis; coenzyme A biosynthesis; CoA from (R)-pantothenate: step 4/5. In terms of biological role, reversibly transfers an adenylyl group from ATP to 4'-phosphopantetheine, yielding dephospho-CoA (dPCoA) and pyrophosphate. The protein is Phosphopantetheine adenylyltransferase of Nitrosomonas eutropha (strain DSM 101675 / C91 / Nm57).